Here is a 231-residue protein sequence, read N- to C-terminus: uncharacterized protein (231 aa).

Residues 4–116 (RILVVEDDED…ELHARVIAQL (113 aa)) form the Response regulatory domain. 4-aspartylphosphate is present on D52. Residues 129 to 230 (EETFLIGGKL…EWGRGYRFGA (102 aa)) constitute a DNA-binding region (ompR/PhoB-type).

Phosphorylated by YrkQ.

The protein localises to the cytoplasm. Functionally, member of the two-component regulatory system YrkQ/YrkP. This is an uncharacterized protein from Bacillus subtilis (strain 168).